An 898-amino-acid polypeptide reads, in one-letter code: DNA damage-induced apoptosis suppressor protein (898 aa).

Disordered stretches follow at residues 191-210 (CGSQEHSSQSLTSDDSDSDL), 643-670 (SINTSKEMPYRPSNNNLTPSSSGDHEGS), and 710-749 (YPINENRGQPSQKPSLQSISPSRYSRPRSQSDSECDFEES). Composition is skewed to polar residues over residues 643–664 (SINTSKEMPYRPSNNNLTPSSS) and 710–725 (YPINENRGQPSQKPSL). Residues 726 to 741 (QSISPSRYSRPRSQSD) show a composition bias toward low complexity.

In terms of tissue distribution, highly expressed in the testis, spleen and heart. Expressed at high levels in the primary spermatocytes and to a lesser extent in the round spermatids. Also found in the bone marrow, brain, lung, kidney and liver.

Its subcellular location is the cytoplasm. The protein localises to the nucleus. Its function is as follows. May be an anti-apoptotic protein involved in DNA repair or cell survival. The chain is DNA damage-induced apoptosis suppressor protein (Ddias) from Mus musculus (Mouse).